The following is a 128-amino-acid chain: Nascent polypeptide-associated complex protein (128 aa).

The NAC-A/B domain maps to 8 to 75 (PRMLKKMQKM…PKKIKKEKVE (68 aa)).

The protein belongs to the NAC-alpha family. In terms of assembly, homodimer. Interacts with the ribosome. Binds ribosomal RNA.

Contacts the emerging nascent chain on the ribosome. The chain is Nascent polypeptide-associated complex protein from Methanocaldococcus jannaschii (strain ATCC 43067 / DSM 2661 / JAL-1 / JCM 10045 / NBRC 100440) (Methanococcus jannaschii).